Consider the following 171-residue polypeptide: 3-hydroxydecanoyl-[acyl-carrier-protein] dehydratase (171 aa).

The active site involves histidine 70.

The protein belongs to the thioester dehydratase family. FabA subfamily. Homodimer.

The protein localises to the cytoplasm. It carries out the reaction a (3R)-hydroxyacyl-[ACP] = a (2E)-enoyl-[ACP] + H2O. It catalyses the reaction (3R)-hydroxydecanoyl-[ACP] = (2E)-decenoyl-[ACP] + H2O. The enzyme catalyses (2E)-decenoyl-[ACP] = (3Z)-decenoyl-[ACP]. Its pathway is lipid metabolism; fatty acid biosynthesis. In terms of biological role, necessary for the introduction of cis unsaturation into fatty acids. Catalyzes the dehydration of (3R)-3-hydroxydecanoyl-ACP to E-(2)-decenoyl-ACP and then its isomerization to Z-(3)-decenoyl-ACP. Can catalyze the dehydratase reaction for beta-hydroxyacyl-ACPs with saturated chain lengths up to 16:0, being most active on intermediate chain length. The polypeptide is 3-hydroxydecanoyl-[acyl-carrier-protein] dehydratase (Vibrio campbellii (strain ATCC BAA-1116)).